Reading from the N-terminus, the 103-residue chain is MSNFLFPCNSTFFSALVSNSSRPGGGGGGGNVKSTISSAFISKLLGGGGGGGRNVSSFTDDGTIGLSSSSISYPGGGGGGGGSAKSLSSSKPGGGGGSPLIFL.

A disordered region spans residues Ser69–Leu103. 2 stretches are compositionally biased toward gly residues: residues Pro74 to Ser83 and Pro92 to Leu103.

This is an uncharacterized protein from Saccharomyces cerevisiae (strain ATCC 204508 / S288c) (Baker's yeast).